The primary structure comprises 345 residues: Anthranilate phosphoribosyltransferase (345 aa).

5-phospho-alpha-D-ribose 1-diphosphate is bound by residues Gly-84, 87–88, Thr-92, 94–97, 112–120, and Ser-124; these read GD, NIST, and KHGGRSVSS. Residue Gly-84 participates in anthranilate binding. Ser-96 lines the Mg(2+) pocket. Position 170 (Arg-170) interacts with anthranilate. 2 residues coordinate Mg(2+): Asp-229 and Glu-230.

The protein belongs to the anthranilate phosphoribosyltransferase family. In terms of assembly, homodimer. Requires Mg(2+) as cofactor.

It carries out the reaction N-(5-phospho-beta-D-ribosyl)anthranilate + diphosphate = 5-phospho-alpha-D-ribose 1-diphosphate + anthranilate. It functions in the pathway amino-acid biosynthesis; L-tryptophan biosynthesis; L-tryptophan from chorismate: step 2/5. Functionally, catalyzes the transfer of the phosphoribosyl group of 5-phosphorylribose-1-pyrophosphate (PRPP) to anthranilate to yield N-(5'-phosphoribosyl)-anthranilate (PRA). The chain is Anthranilate phosphoribosyltransferase from Leptothrix cholodnii (strain ATCC 51168 / LMG 8142 / SP-6) (Leptothrix discophora (strain SP-6)).